The sequence spans 185 residues: Bacteriocin UviA (185 aa).

Functionally, may have a role in bacteriocin secretion or immunity. The protein is Bacteriocin UviA (uviA) of Clostridium perfringens.